Here is a 383-residue protein sequence, read N- to C-terminus: Protein phosphatase 2C homolog 4 (383 aa).

Residues 51–356 (SLGLCTARGD…DDITCLVVRL (306 aa)) form the PPM-type phosphatase domain. Positions 92, 308, and 347 each coordinate Mn(2+).

This sequence belongs to the PP2C family. As to quaternary structure, monomer. The cofactor is Mg(2+). Requires Mn(2+) as cofactor.

The protein localises to the vacuole membrane. The enzyme catalyses O-phospho-L-seryl-[protein] + H2O = L-seryl-[protein] + phosphate. It carries out the reaction O-phospho-L-threonyl-[protein] + H2O = L-threonyl-[protein] + phosphate. Has a role in the regulation of vacuole fusion. This chain is Protein phosphatase 2C homolog 4 (ptc4), found in Schizosaccharomyces pombe (strain 972 / ATCC 24843) (Fission yeast).